Consider the following 360-residue polypeptide: Photosystem II protein D1 (360 aa).

3 helical membrane passes run Tyr-29–Ser-46, His-118–Leu-133, and Trp-142–Ala-156. His-118 contributes to the chlorophyll a binding site. Residue Tyr-126 participates in pheophytin a binding. Asp-170 and Glu-189 together coordinate [CaMn4O5] cluster. Residues Phe-197–Leu-218 traverse the membrane as a helical segment. His-198 contacts chlorophyll a. A quinone-binding positions include His-215 and Ser-264 to Phe-265. A Fe cation-binding site is contributed by His-215. His-272 contributes to the Fe cation binding site. Residues Phe-274 to Met-288 form a helical membrane-spanning segment. Positions 332, 333, 342, and 344 each coordinate [CaMn4O5] cluster. A propeptide spanning residues Ala-345–Ala-360 is cleaved from the precursor.

It belongs to the reaction center PufL/M/PsbA/D family. In terms of assembly, PSII is composed of 1 copy each of membrane proteins PsbA, PsbB, PsbC, PsbD, PsbE, PsbF, PsbH, PsbI, PsbJ, PsbK, PsbL, PsbM, PsbT, PsbX, PsbY, PsbZ, Psb30/Ycf12, at least 3 peripheral proteins of the oxygen-evolving complex and a large number of cofactors. It forms dimeric complexes. The D1/D2 heterodimer binds P680, chlorophylls that are the primary electron donor of PSII, and subsequent electron acceptors. It shares a non-heme iron and each subunit binds pheophytin, quinone, additional chlorophylls, carotenoids and lipids. D1 provides most of the ligands for the Mn4-Ca-O5 cluster of the oxygen-evolving complex (OEC). There is also a Cl(-1) ion associated with D1 and D2, which is required for oxygen evolution. The PSII complex binds additional chlorophylls, carotenoids and specific lipids. serves as cofactor. Tyr-161 forms a radical intermediate that is referred to as redox-active TyrZ, YZ or Y-Z. Post-translationally, C-terminally processed by CTPA; processing is essential to allow assembly of the oxygen-evolving complex and thus photosynthetic growth.

The protein resides in the plastid. Its subcellular location is the chloroplast thylakoid membrane. It catalyses the reaction 2 a plastoquinone + 4 hnu + 2 H2O = 2 a plastoquinol + O2. Photosystem II (PSII) is a light-driven water:plastoquinone oxidoreductase that uses light energy to abstract electrons from H(2)O, generating O(2) and a proton gradient subsequently used for ATP formation. It consists of a core antenna complex that captures photons, and an electron transfer chain that converts photonic excitation into a charge separation. The D1/D2 (PsbA/PsbD) reaction center heterodimer binds P680, the primary electron donor of PSII as well as several subsequent electron acceptors. The sequence is that of Photosystem II protein D1 from Emiliania huxleyi (Coccolithophore).